A 297-amino-acid chain; its full sequence is Probable endonuclease 4 (297 aa).

Zn(2+) is bound by residues His69, His110, Glu145, Asp179, His182, His214, Asp227, His229, and Glu259.

The protein belongs to the AP endonuclease 2 family. It depends on Zn(2+) as a cofactor.

It catalyses the reaction Endonucleolytic cleavage to 5'-phosphooligonucleotide end-products.. Endonuclease IV plays a role in DNA repair. It cleaves phosphodiester bonds at apurinic or apyrimidinic (AP) sites, generating a 3'-hydroxyl group and a 5'-terminal sugar phosphate. The polypeptide is Probable endonuclease 4 (Listeria monocytogenes serotype 4b (strain F2365)).